Reading from the N-terminus, the 79-residue chain is MCSYSSKANTNARITDSSIWSPQPGQHISIQTYRELNPAPTSSPTSTRTEIQLNGENSRSTADLPGEANRLLMIHMPRR.

Disordered regions lie at residues 1–24 (MCSY…SPQP) and 36–79 (LNPA…MPRR). Residues 38 to 47 (PAPTSSPTST) show a composition bias toward low complexity. The span at 48–61 (RTEIQLNGENSRST) shows a compositional bias: polar residues.

This sequence belongs to the geminiviridae protein AC4/C4 family.

Functionally, pathogenicity determinant. May act as a suppressor of RNA-mediated gene silencing, also known as post-transcriptional gene silencing (PTGS), a mechanism of plant viral defense that limits the accumulation of viral RNAs. This is Protein AC4 from Abutilon (Upland cotton).